Reading from the N-terminus, the 74-residue chain is Exodeoxyribonuclease 7 small subunit (74 aa).

The protein belongs to the XseB family. As to quaternary structure, heterooligomer composed of large and small subunits.

It is found in the cytoplasm. The catalysed reaction is Exonucleolytic cleavage in either 5'- to 3'- or 3'- to 5'-direction to yield nucleoside 5'-phosphates.. In terms of biological role, bidirectionally degrades single-stranded DNA into large acid-insoluble oligonucleotides, which are then degraded further into small acid-soluble oligonucleotides. The polypeptide is Exodeoxyribonuclease 7 small subunit (Vesicomyosocius okutanii subsp. Calyptogena okutanii (strain HA)).